Reading from the N-terminus, the 613-residue chain is Potassium voltage-gated channel subfamily A member 5 (613 aa).

The interval Met-1–Glu-108 is disordered. The tetramerization domain stretch occupies residues Met-1 to Glu-211. Topologically, residues Met-1–Gly-247 are cytoplasmic. Over residues Gly-45–Ser-62 the composition is skewed to basic and acidic residues. A run of 2 repeats spans residues Asp-61–Pro-71 and Asp-72–Pro-82. The 2 X 11 AA tandem repeat of D-[SP]-G-V-R-P-L-P-P-L-P stretch occupies residues Asp-61–Pro-82. Pro residues predominate over residues Pro-66–Glu-83. Residues Glu-84–Pro-93 are compositionally biased toward basic and acidic residues. Lys-221 participates in a covalent cross-link: Glycyl lysine isopeptide (Lys-Gly) (interchain with G-Cter in SUMO). A helical transmembrane segment spans residues Ser-248–Leu-269. The Extracellular portion of the chain corresponds to Glu-270–Pro-323. The interval Leu-282–Met-304 is disordered. Over residues Pro-285–Ala-295 the composition is skewed to pro residues. Residues Phe-324–Ala-345 traverse the membrane as a helical segment. The S-palmitoyl cysteine moiety is linked to residue Cys-346. The Cytoplasmic portion of the chain corresponds to Cys-346–Ile-356. The helical transmembrane segment at Met-357–Ala-377 threads the bilayer. The Extracellular portion of the chain corresponds to Glu-378–Ser-395. The helical; Voltage-sensor transmembrane segment at Leu-396–His-416 threads the bilayer. Topologically, residues Ser-417–Met-431 are cytoplasmic. Residues Lys-418 to Met-431 form an S4-S5 linker region. The chain crosses the membrane as a helical span at residues Arg-432–Tyr-453. The Extracellular portion of the chain corresponds to Phe-454–Ile-467. Residues Pro-468–Thr-479 constitute an intramembrane region (helical). The Selectivity filter signature appears at Thr-480–Asp-485. An intramembrane segment occupies Thr-480 to Arg-487. Over Pro-488–Lys-494 the chain is Extracellular. The chain crosses the membrane as a helical span at residues Ile-495 to Tyr-523. Over His-524–Leu-613 the chain is Cytoplasmic. A disordered region spans residues Pro-532–Ser-559. Residue Lys-536 forms a Glycyl lysine isopeptide (Lys-Gly) (interchain with G-Cter in SUMO) linkage. Residue Ser-557 is modified to Phosphoserine; by PKA. Positions Thr-611–Leu-613 match the PDZ-binding motif.

The protein belongs to the potassium channel family. A (Shaker) (TC 1.A.1.2) subfamily. Kv1.5/KCNA5 sub-subfamily. As to quaternary structure, homotetramer and heterotetramer of potassium channel proteins. Interacts with DLG1, which enhances channel currents. Forms a ternary complex with DLG1 and CAV3. Interacts with KCNAB1. Interacts with UBE2I. Interacts with XIRP2; the interaction is required for normal action potential configuration in the heart. Glycosylated. In terms of processing, sumoylated on Lys-221, and Lys-536, preferentially with SUMO3. Sumoylation regulates the voltage sensitivity of the channel. Pancreatic islets and insulinoma.

The protein localises to the cell membrane. The enzyme catalyses K(+)(in) = K(+)(out). Inhibited by 4-aminopyridine, nicotine, bepridil, correolide, and endothelin-1. In terms of biological role, voltage-gated potassium channel that mediates transmembrane potassium transport in excitable membranes. Forms tetrameric potassium-selective channels through which potassium ions pass in accordance with their electrochemical gradient. The channel alternates between opened and closed conformations in response to the voltage difference across the membrane. Can form functional homotetrameric channels and heterotetrameric channels that contain variable proportions of KCNA1, KCNA2, KCNA4, KCNA5, and possibly other family members as well; channel properties depend on the type of alpha subunits that are part of the channel. Channel properties are modulated by cytoplasmic beta subunits that regulate the subcellular location of the alpha subunits and promote rapid inactivation. Homotetrameric channels display rapid activation and slow inactivation. Required for normal electrical conduction including formation of the infranodal ventricular conduction system and normal action potential configuration, as a result of its interaction with XIRP2. May play a role in regulating the secretion of insulin in normal pancreatic islets. Exhibits a faster depolarization rate, reduced voltage-dependent recovery from inactivation and an excessive cumulative inactivation. The polypeptide is Potassium voltage-gated channel subfamily A member 5 (KCNA5) (Homo sapiens (Human)).